Reading from the N-terminus, the 220-residue chain is Probable cytidylate kinase (220 aa).

Gly10–Ser18 serves as a coordination point for ATP.

This sequence belongs to the cytidylate kinase family. Type 1 subfamily.

The catalysed reaction is CMP + ATP = CDP + ADP. It carries out the reaction dCMP + ATP = dCDP + ADP. This is Probable cytidylate kinase from Encephalitozoon cuniculi (strain GB-M1) (Microsporidian parasite).